A 119-amino-acid chain; its full sequence is Autophagy-related protein 8B (119 aa).

Gly-117 carries Phosphatidylethanolamine amidated glycine lipidation. A propeptide spans 118–119 (removed in mature form); sequence LL.

Belongs to the ATG8 family. Interacts with ATG4. In terms of processing, the C-terminal 2 residues are removed by ATG4 to expose Gly-117 at the C-terminus. The C-terminal Gly is then amidated with phosphatidylethanolamine by an activating system similar to that for ubiquitin.

Its subcellular location is the cytoplasmic vesicle. It localises to the autophagosome membrane. It is found in the vacuole membrane. The protein resides in the cytoplasm. The protein localises to the cytoskeleton. Functionally, ubiquitin-like modifier involved in autophagosomes formation. May mediate the delivery of the autophagosomes to the vacuole via the microtubule cytoskeleton. This Oryza sativa subsp. indica (Rice) protein is Autophagy-related protein 8B (ATG8B).